The primary structure comprises 210 residues: Redox-sensing transcriptional repressor Rex (210 aa).

The H-T-H motif DNA-binding region spans 17 to 56 (KYHRYLYELLKNDVDRISSKELSEKIGFTASQIRQDLNCF). 91-96 (GAGNIG) serves as a coordination point for NAD(+).

The protein belongs to the transcriptional regulatory Rex family. Homodimer.

It is found in the cytoplasm. Its function is as follows. Modulates transcription in response to changes in cellular NADH/NAD(+) redox state. The chain is Redox-sensing transcriptional repressor Rex from Clostridium botulinum (strain ATCC 19397 / Type A).